A 93-amino-acid chain; its full sequence is Red pigment-concentrating hormone (93 aa).

The N-terminal stretch at 1–21 is a signal peptide; sequence MVRAVVATLLVVLVVASCVSA. Pyrrolidone carboxylic acid is present on Q22. W29 carries the tryptophan amide modification. Positions 33–93 are excised as a propeptide; that stretch reads AAAGGEGTGM…VQCQDEEYLG (61 aa). Positions 34 to 56 are disordered; the sequence is AAGGEGTGMHPPAGAVVPPPSSL.

Belongs to the AKH/HRTH/RPCH family. Strongly expressed in the eyestalk and weakly in brain. Not expressed in other tissues tested.

It is found in the secreted. Its function is as follows. This hormone adapts the animal to light backgrounds by stimulating concentration of the pigment of its red body-chromatophores. The chain is Red pigment-concentrating hormone from Penaeus monodon (Giant tiger prawn).